The sequence spans 172 residues: Adenine phosphoribosyltransferase (172 aa).

This sequence belongs to the purine/pyrimidine phosphoribosyltransferase family. In terms of assembly, homodimer.

It localises to the cytoplasm. The enzyme catalyses AMP + diphosphate = 5-phospho-alpha-D-ribose 1-diphosphate + adenine. The protein operates within purine metabolism; AMP biosynthesis via salvage pathway; AMP from adenine: step 1/1. Functionally, catalyzes a salvage reaction resulting in the formation of AMP, that is energically less costly than de novo synthesis. The polypeptide is Adenine phosphoribosyltransferase (Clostridium botulinum (strain ATCC 19397 / Type A)).